We begin with the raw amino-acid sequence, 556 residues long: Formate--tetrahydrofolate ligase (556 aa).

65–72 provides a ligand contact to ATP; that stretch reads TPAGEGKS.

Belongs to the formate--tetrahydrofolate ligase family.

It catalyses the reaction (6S)-5,6,7,8-tetrahydrofolate + formate + ATP = (6R)-10-formyltetrahydrofolate + ADP + phosphate. It functions in the pathway one-carbon metabolism; tetrahydrofolate interconversion. This is Formate--tetrahydrofolate ligase from Enterococcus faecalis (strain ATCC 700802 / V583).